A 250-amino-acid polypeptide reads, in one-letter code: uncharacterized protein (250 aa).

An N-terminal signal peptide occupies residues 1 to 17; it reads MRTLVLLSSVAILSTLA. 4 N-linked (GlcNAc...) asparagine glycosylation sites follow: Asn48, Asn159, Asn223, and Asn239.

The protein resides in the secreted. This is an uncharacterized protein from Caenorhabditis elegans.